The chain runs to 252 residues: Imidazole glycerol phosphate synthase subunit HisF (252 aa).

Residues D11 and D130 contribute to the active site.

The protein belongs to the HisA/HisF family. In terms of assembly, heterodimer of HisH and HisF.

Its subcellular location is the cytoplasm. The enzyme catalyses 5-[(5-phospho-1-deoxy-D-ribulos-1-ylimino)methylamino]-1-(5-phospho-beta-D-ribosyl)imidazole-4-carboxamide + L-glutamine = D-erythro-1-(imidazol-4-yl)glycerol 3-phosphate + 5-amino-1-(5-phospho-beta-D-ribosyl)imidazole-4-carboxamide + L-glutamate + H(+). Its pathway is amino-acid biosynthesis; L-histidine biosynthesis; L-histidine from 5-phospho-alpha-D-ribose 1-diphosphate: step 5/9. Its function is as follows. IGPS catalyzes the conversion of PRFAR and glutamine to IGP, AICAR and glutamate. The HisF subunit catalyzes the cyclization activity that produces IGP and AICAR from PRFAR using the ammonia provided by the HisH subunit. The chain is Imidazole glycerol phosphate synthase subunit HisF from Bacillus mycoides (strain KBAB4) (Bacillus weihenstephanensis).